A 476-amino-acid polypeptide reads, in one-letter code: Sulfate adenylyltransferase subunit 1 (476 aa).

Residues 17-232 form the tr-type G domain; the sequence is KDLLRLLTAG…LETVHIDSDN (216 aa). Positions 26-33 are G1; it reads GSVDDGKS. 26 to 33 is a GTP binding site; that stretch reads GSVDDGKS. A G2 region spans residues 84–88; that stretch reads GITID. Residues 105 to 108 are G3; sequence DTPG. GTP is bound by residues 105-109 and 160-163; these read DTPGH and NKMD. Residues 160 to 163 are G4; sequence NKMD. A G5 region spans residues 197 to 199; it reads SAL.

The protein belongs to the TRAFAC class translation factor GTPase superfamily. Classic translation factor GTPase family. CysN/NodQ subfamily. In terms of assembly, heterodimer composed of CysD, the smaller subunit, and CysN.

It carries out the reaction sulfate + ATP + H(+) = adenosine 5'-phosphosulfate + diphosphate. The protein operates within sulfur metabolism; hydrogen sulfide biosynthesis; sulfite from sulfate: step 1/3. With CysD forms the ATP sulfurylase (ATPS) that catalyzes the adenylation of sulfate producing adenosine 5'-phosphosulfate (APS) and diphosphate, the first enzymatic step in sulfur assimilation pathway. APS synthesis involves the formation of a high-energy phosphoric-sulfuric acid anhydride bond driven by GTP hydrolysis by CysN coupled to ATP hydrolysis by CysD. The protein is Sulfate adenylyltransferase subunit 1 of Bacteroides fragilis (strain YCH46).